The chain runs to 460 residues: Chromosomal replication initiator protein DnaA (460 aa).

Residues 1-91 (MSLINPKVSA…LLWQNEDKSI (91 aa)) form a domain I, interacts with DnaA modulators region. Residues 91 to 122 (ICSIDIQVTEEKNSSSSIISKNKEESVNNLGS) form a domain II region. The segment at 123-342 (PLDPRFTFDN…GALNKVAHTS (220 aa)) is domain III, AAA+ region. Residues G169, G171, K172, and T173 each contribute to the ATP site. The tract at residues 343 to 460 (LIGRSMTVES…EINQLRKMFK (118 aa)) is domain IV, binds dsDNA.

It belongs to the DnaA family. In terms of assembly, oligomerizes as a right-handed, spiral filament on DNA at oriC.

The protein resides in the cytoplasm. Plays an essential role in the initiation and regulation of chromosomal replication. ATP-DnaA binds to the origin of replication (oriC) to initiate formation of the DNA replication initiation complex once per cell cycle. Binds the DnaA box (a 9 base pair repeat at the origin) and separates the double-stranded (ds)DNA. Forms a right-handed helical filament on oriC DNA; dsDNA binds to the exterior of the filament while single-stranded (ss)DNA is stabiized in the filament's interior. The ATP-DnaA-oriC complex binds and stabilizes one strand of the AT-rich DNA unwinding element (DUE), permitting loading of DNA polymerase. After initiation quickly degrades to an ADP-DnaA complex that is not apt for DNA replication. Binds acidic phospholipids. In Wolbachia sp. subsp. Brugia malayi (strain TRS), this protein is Chromosomal replication initiator protein DnaA.